The chain runs to 92 residues: Serine protease inhibitor I/II (92 aa).

An N-terminal signal peptide occupies residues 1–19 (MKLALALCAAFLLVVLVQA). Pacifastin domains lie at 20-54 (EQECTPGQTKKQDCNTCNCTPTGVWACTRKGCPPH) and 57-92 (EVTCEPGTTFKDKCNTCRCGSDGKSAACTLKACPQK). 6 disulfides stabilise this stretch: C23–C38, C33–C51, C36–C46, C60–C75, C70–C89, and C73–C84.

The protein belongs to the protease inhibitor I19 family. Expressed in hemolymph, ovaries, testes and fat body of adults but are absent in the gut. Also present in larval hemolymph and fat body.

The protein resides in the secreted. In terms of biological role, in vitro, is active against alpha-chymotrypsin and trypsin. In vitro, is active against alpha-chymotrypsin and pancreatic elastase. The sequence is that of Serine protease inhibitor I/II from Schistocerca gregaria (Desert locust).